Reading from the N-terminus, the 586-residue chain is Regulatory protein NPR3 (586 aa).

Phosphoserine is present on serine 10. The BTB domain occupies 60–135; it reads SDAEIIVDGV…IYTGRLKPFP (76 aa). The segment at 138-152 adopts a C2HC NPR-type zinc-finger fold; that stretch reads VSTCVDPVCSHDCCR. 4 residues coordinate Zn(2+): cysteine 141, cysteine 146, histidine 148, and cysteine 151. 3 ANK repeats span residues 261–291, 293–320, and 324–353; these read ERIGKILKALDSDDVELVKLLLTESDITLDQ, NGLHYSVVYSDPKVVAEILALDMGDVNY, and RGYTVLHFAAMRREPSIIISLIDKGANASE. The tract at residues 383-523 is salicylic acid-binding core (SBC); the sequence is ESSKARLCID…MAEYIDDDIL (141 aa). Arginine 428 is a salicylate binding site. A disordered region spans residues 554–586; the sequence is YSKDKESKIARSCLSASSSPSSSSIRDDLHNTT. Residues 565-577 show a composition bias toward low complexity; it reads SCLSASSSPSSSS.

The protein belongs to the plant 'ANKYRIN-BTB/POZ' family. 'NPR1-like' subfamily. Forms homodimers and heterodimers with NPR4 in the presence of salicylic acid (SA). Interacts with TGA2, TGA3, TGA5 and TGA6. Interacts with CUL3A, a core component of the cullin-RING ubiquitin ligases (CRL). Interacts with TGA2 in vivo in the nucleus. Binds to NPR1; this interaction is promoted by association with SA, probably due to conformational changes.

It is found in the nucleus. It participates in protein modification; protein ubiquitination. Functionally, salicylic acid (SA)-binding substrate-specific adapter of an E3 ubiquitin-protein ligase complex (CUL3-RBX1-BTB) which mediates the ubiquitination and subsequent proteasomal degradation of NPR1 in response to SA. Together with NPR4, acts as receptor of salicylic acid to monitor immunity in a NPR1-dependent manner and induce systemic acquired resistance (SAR). Involved in the regulation of basal defense responses against pathogens, and may be implicated in the cross-talk between the SA- and JA-dependent signaling pathways. In Arabidopsis thaliana (Mouse-ear cress), this protein is Regulatory protein NPR3.